Here is a 951-residue protein sequence, read N- to C-terminus: Valine--tRNA ligase (951 aa).

The short motif at 40–50 (PNVTGSLHMGH) is the 'HIGH' region element. Residues 551 to 555 (KMSKS) carry the 'KMSKS' region motif. Residue K554 participates in ATP binding. Residues 879–950 (MAGLIDVEAE…LLEQKAKIES (72 aa)) are a coiled coil.

This sequence belongs to the class-I aminoacyl-tRNA synthetase family. ValS type 1 subfamily. Monomer.

Its subcellular location is the cytoplasm. It carries out the reaction tRNA(Val) + L-valine + ATP = L-valyl-tRNA(Val) + AMP + diphosphate. Its function is as follows. Catalyzes the attachment of valine to tRNA(Val). As ValRS can inadvertently accommodate and process structurally similar amino acids such as threonine, to avoid such errors, it has a 'posttransfer' editing activity that hydrolyzes mischarged Thr-tRNA(Val) in a tRNA-dependent manner. This Pseudoalteromonas translucida (strain TAC 125) protein is Valine--tRNA ligase.